The sequence spans 406 residues: Testis-specific Y-encoded-like protein 5 (406 aa).

Residues 1–25 (MSGRSRGRKSSRAKGRGKGRARARV) show a composition bias toward basic residues. Disordered regions lie at residues 1 to 67 (MSGR…PAEL), 132 to 164 (IGNRRVPGRKAPDTRSATGRGPQATVSGKPKMA), and 382 to 406 (RGEKGKEERPGPAKLSPAPAVRQPN). The segment covering 27-38 (AAAEDAWHDEKP) has biased composition (basic and acidic residues). A compositionally biased stretch (low complexity) spans 49 to 62 (AAAQVQAGAAQGGA). The segment covering 382–392 (RGEKGKEERPG) has biased composition (basic and acidic residues).

It belongs to the nucleosome assembly protein (NAP) family. Interacts with USP7.

Its function is as follows. Involved in modulation of cell growth and cellular response to gamma radiation probably via regulation of the Akt signaling pathway. Involved in regulation of p53/TP53. Suppresses p53/TP53 protein levels and promotes its ubiquitination; the function is dependent on USP7 and independent on MDM2. Proposed to displace p53/TP53 from interaction with USP7. The polypeptide is Testis-specific Y-encoded-like protein 5 (Tspyl5) (Mus musculus (Mouse)).